Here is a 210-residue protein sequence, read N- to C-terminus: ATP phosphoribosyltransferase (210 aa).

The protein belongs to the ATP phosphoribosyltransferase family. Short subfamily. As to quaternary structure, heteromultimer composed of HisG and HisZ subunits.

The protein resides in the cytoplasm. It carries out the reaction 1-(5-phospho-beta-D-ribosyl)-ATP + diphosphate = 5-phospho-alpha-D-ribose 1-diphosphate + ATP. It functions in the pathway amino-acid biosynthesis; L-histidine biosynthesis; L-histidine from 5-phospho-alpha-D-ribose 1-diphosphate: step 1/9. In terms of biological role, catalyzes the condensation of ATP and 5-phosphoribose 1-diphosphate to form N'-(5'-phosphoribosyl)-ATP (PR-ATP). Has a crucial role in the pathway because the rate of histidine biosynthesis seems to be controlled primarily by regulation of HisG enzymatic activity. The protein is ATP phosphoribosyltransferase of Caldanaerobacter subterraneus subsp. tengcongensis (strain DSM 15242 / JCM 11007 / NBRC 100824 / MB4) (Thermoanaerobacter tengcongensis).